An 89-amino-acid chain; its full sequence is Small ribosomal subunit protein uS15 (89 aa).

Belongs to the universal ribosomal protein uS15 family. Part of the 30S ribosomal subunit. Forms a bridge to the 50S subunit in the 70S ribosome, contacting the 23S rRNA.

In terms of biological role, one of the primary rRNA binding proteins, it binds directly to 16S rRNA where it helps nucleate assembly of the platform of the 30S subunit by binding and bridging several RNA helices of the 16S rRNA. Its function is as follows. Forms an intersubunit bridge (bridge B4) with the 23S rRNA of the 50S subunit in the ribosome. This is Small ribosomal subunit protein uS15 from Coxiella burnetii (strain CbuK_Q154) (Coxiella burnetii (strain Q154)).